Consider the following 417-residue polypeptide: Gamma-glutamyl phosphate reductase (417 aa).

Belongs to the gamma-glutamyl phosphate reductase family.

It localises to the cytoplasm. The enzyme catalyses L-glutamate 5-semialdehyde + phosphate + NADP(+) = L-glutamyl 5-phosphate + NADPH + H(+). Its pathway is amino-acid biosynthesis; L-proline biosynthesis; L-glutamate 5-semialdehyde from L-glutamate: step 2/2. Catalyzes the NADPH-dependent reduction of L-glutamate 5-phosphate into L-glutamate 5-semialdehyde and phosphate. The product spontaneously undergoes cyclization to form 1-pyrroline-5-carboxylate. The polypeptide is Gamma-glutamyl phosphate reductase (Legionella pneumophila (strain Corby)).